Consider the following 341-residue polypeptide: Glucokinase (341 aa).

18 to 23 (GDIGGT) provides a ligand contact to ATP.

Belongs to the bacterial glucokinase family.

The protein localises to the cytoplasm. The catalysed reaction is D-glucose + ATP = D-glucose 6-phosphate + ADP + H(+). The protein is Glucokinase of Mesorhizobium japonicum (strain LMG 29417 / CECT 9101 / MAFF 303099) (Mesorhizobium loti (strain MAFF 303099)).